The chain runs to 533 residues: Probable ADP-ribosylation factor-binding protein C25H2.16c (533 aa).

Residues Ala-15–Pro-151 form the VHS domain. The GAT domain maps to Arg-178 to Glu-305. Position 320 is a phosphoserine (Ser-320). A GAE domain is found at Asn-417–Leu-532.

This sequence belongs to the GGA protein family.

It is found in the golgi apparatus. The protein localises to the trans-Golgi network. In terms of biological role, may play a role in the regulation of membrane traffic through the trans-Golgi network. This chain is Probable ADP-ribosylation factor-binding protein C25H2.16c, found in Schizosaccharomyces pombe (strain 972 / ATCC 24843) (Fission yeast).